A 673-amino-acid chain; its full sequence is Xaa-Pro aminopeptidase 2 (673 aa).

A signal peptide spans 1-21 (MAQACWGCYPWLVLICACAWG). 3 N-linked (GlcNAc...) asparagine glycosylation sites follow: N34, N48, and N64. Substrate is bound at residue R115. N-linked (GlcNAc...) asparagine glycans are attached at residues N277, N290, and N294. H429 contacts substrate. Mn(2+) is bound at residue D449. Residues D449, D460, and H523 each contribute to the Zn(2+) site. Residues H523, H532, and E554 each coordinate substrate. E554 and E568 together coordinate Zn(2+). The GPI-anchor amidated alanine moiety is linked to residue A649. Positions 650-673 (RAAPTTSLGSLMTVSALAILGWSV) are cleaved as a propeptide — removed in mature form.

This sequence belongs to the peptidase M24B family. Homotrimer. Zn(2+) serves as cofactor. N-glycosylated. As to expression, kidney.

It localises to the cell membrane. It carries out the reaction Release of any N-terminal amino acid, including proline, that is linked to proline, even from a dipeptide or tripeptide.. Inhibited by apstatin and the metal ion chelator EDTA. Potently inhibited by the converting enzyme inhibitors cilazaprilat; enalaprilat; L155,212; ramiprilat and YS 980. Also inhibited to a lesser extent by indolaprilat; quinaprilat; spiraprilat; captopril and zofenoprilat. Functionally, membrane-bound metalloprotease which catalyzes the removal of a penultimate prolyl residue from the N-termini of peptides, such as Arg-Pro-Pro. May play a role in the metabolism of the vasodilator bradykinin. The chain is Xaa-Pro aminopeptidase 2 (XPNPEP2) from Sus scrofa (Pig).